Here is a 231-residue protein sequence, read N- to C-terminus: MQTVRSYFFGPTPQEQNRKWQSIIRKEQRQLDRQVYHLKAGRKKAEVQLKQLAKQSDITNMRILAKEIARANRHGKRLAESKALLGSLSLQLNDQMAMLKIQGTMQSSTKIMQDVSSLIRLPQLSETMRNLSMELTKAGVLEEMRDEMFLPVEDDEELMDLADEDEEVQEILTKYNVIPAPSEKAADAATHREQSLKQALPSLSNGIAKDSTEIDEEQLLDIRDKLDALKS.

Positions 184-195 (KAADAATHREQS) are enriched in basic and acidic residues. A disordered region spans residues 184–214 (KAADAATHREQSLKQALPSLSNGIAKDSTEI).

It belongs to the SNF7 family. Component of the endosomal sorting required for transport complex III (ESCRT-III).

It localises to the endosome membrane. It is found in the endomembrane system. Functionally, class E VPS protein implicated in concentration and sorting of cargo proteins of the multivesicular body (MVB) for incorporation into intralumenal vesicles. The lumenal sequestrated membrane proteins will be targeted into the vacuole after fusion of the endosome with the vacuole. The sequence is that of Vacuolar protein sorting-associated protein 24 (vps24) from Schizosaccharomyces pombe (strain 972 / ATCC 24843) (Fission yeast).